The primary structure comprises 207 residues: Outer-membrane lipoprotein LolB (207 aa).

Positions 1-21 are cleaved as a signal peptide; that stretch reads MTLPDFRLIRLLPLASLVLTA. Residue Cys-22 is the site of N-palmitoyl cysteine attachment. Cys-22 carries the S-diacylglycerol cysteine lipid modification.

It belongs to the LolB family. As to quaternary structure, monomer.

The protein resides in the cell outer membrane. In terms of biological role, plays a critical role in the incorporation of lipoproteins in the outer membrane after they are released by the LolA protein. The polypeptide is Outer-membrane lipoprotein LolB (Salmonella schwarzengrund (strain CVM19633)).